Here is a 621-residue protein sequence, read N- to C-terminus: Chaperone protein DnaK (621 aa).

Thr-179 bears the Phosphothreonine; by autocatalysis mark. Residues 583–605 show a composition bias toward polar residues; the sequence is SQVQDTQGAAQGQSQGNPQQTAD. Residues 583–621 form a disordered region; that stretch reads SQVQDTQGAAQGQSQGNPQQTADNRGKVVDAEIVDENKE. Residues 606 to 621 are compositionally biased toward basic and acidic residues; sequence NRGKVVDAEIVDENKE.

Belongs to the heat shock protein 70 family.

Functionally, acts as a chaperone. In Endomicrobium trichonymphae, this protein is Chaperone protein DnaK.